The sequence spans 206 residues: Cytochrome b-245 chaperone 1 homolog (206 aa).

The helical transmembrane segment at 21–43 (GIRSWSILVGIASVGLAAAYYSS) threads the bilayer. The disordered stretch occupies residues 172-206 (ADDDYPDDDDGIEDLGLGDSSDSQDDPDGDDDEEH). Composition is skewed to acidic residues over residues 174–184 (DDYPDDDDGIE) and 193–206 (DSQD…DEEH).

The protein belongs to the CYBC1 family.

The protein localises to the endoplasmic reticulum membrane. Functionally, functions as a chaperone necessary for a stable expression of the CYBA and CYBB subunits of the cytochrome b-245 heterodimer. This is Cytochrome b-245 chaperone 1 homolog from Danio rerio (Zebrafish).